We begin with the raw amino-acid sequence, 244 residues long: Orotidine 5'-phosphate decarboxylase (244 aa).

Residues aspartate 12, lysine 34, 61-70 (DLKLFDIPNT), threonine 125, arginine 187, glutamine 196, glycine 216, and arginine 217 contribute to the substrate site. Catalysis depends on lysine 63, which acts as the Proton donor.

It belongs to the OMP decarboxylase family. Type 1 subfamily. As to quaternary structure, homodimer.

The catalysed reaction is orotidine 5'-phosphate + H(+) = UMP + CO2. It functions in the pathway pyrimidine metabolism; UMP biosynthesis via de novo pathway; UMP from orotate: step 2/2. Its function is as follows. Catalyzes the decarboxylation of orotidine 5'-monophosphate (OMP) to uridine 5'-monophosphate (UMP). The chain is Orotidine 5'-phosphate decarboxylase from Dictyoglomus thermophilum (strain ATCC 35947 / DSM 3960 / H-6-12).